Reading from the N-terminus, the 468-residue chain is Two-component response regulator-like APRR9 (468 aa).

The Response regulatory domain maps to 38 to 156 (RVLLVESDYS…ELKNLWQHVW (119 aa)). Polar residues-rich tracts occupy residues 168 to 177 (HAQSLPASQH) and 194 to 203 (DQGSGAQAIN). Disordered regions lie at residues 168 to 203 (HAQSLPASQHNLEDTDETCEDSRYHSDQGSGAQAIN), 302 to 416 (VVAL…SRSQ), and 442 to 468 (RKKLAEQRPRVKGQFVRTVNSDASTKS). Residues 315 to 327 (TPTESHEKLRKVT) show a composition bias toward basic and acidic residues. The span at 328–364 (SDQGSATTSSNQENIGSSSVSFRNQVLQSTVTNQKQD) shows a compositional bias: polar residues. Basic and acidic residues-rich tracts occupy residues 371 to 382 (SNREKAASKEVE) and 400 to 409 (EKPKEEESAK). The CCT domain occupies 417-459 (REAALMKFRLKRKDRCFDKKVRYQSRKKLAEQRPRVKGQFVRT). The span at 458 to 468 (RTVNSDASTKS) shows a compositional bias: polar residues.

It belongs to the ARR-like family. Phosphorylated. Phosphorylation varies throughout the diurnal cycle.

The protein resides in the nucleus. In terms of biological role, transcriptional repressor of CCA1 and LHY, and positive regulator of LWD1 and LWD2 expression. Controls photoperiodic flowering response and temperature compensation. Involved in the positive and negative feedback loops of the circadian clock. Expression of several members of the ARR-like family is controlled by circadian rhythm. Regulated at the transcriptional level by a corepressor complex consisting of ELF4, ELF3, and LUX. APRR9, APRR7, and APRR5 coordinately act on the upstream region of the target genes to repress their expression from noon until midnight. The particular coordinated sequential expression of APRR9, APRR7, APRR5, APRR3 and APPR1 result to circadian waves that may be at the basis of the endogenous circadian clock. The protein is Two-component response regulator-like APRR9 (APRR9) of Arabidopsis thaliana (Mouse-ear cress).